The sequence spans 220 residues: Ribosomal RNA small subunit methyltransferase G (220 aa).

Residues Gly-78, Leu-83, and Arg-144 each coordinate S-adenosyl-L-methionine.

Belongs to the methyltransferase superfamily. RNA methyltransferase RsmG family.

It is found in the cytoplasm. It catalyses the reaction guanosine(527) in 16S rRNA + S-adenosyl-L-methionine = N(7)-methylguanosine(527) in 16S rRNA + S-adenosyl-L-homocysteine. In terms of biological role, specifically methylates the N7 position of guanine in position 527 of 16S rRNA. The chain is Ribosomal RNA small subunit methyltransferase G from Alkalilimnicola ehrlichii (strain ATCC BAA-1101 / DSM 17681 / MLHE-1).